A 199-amino-acid polypeptide reads, in one-letter code: Imidazole glycerol phosphate synthase subunit HisH (199 aa).

The Glutamine amidotransferase type-1 domain occupies 3-199 (NITIIDTGCA…LKNFVEKVPF (197 aa)). The active-site Nucleophile is the cysteine 78. Catalysis depends on residues histidine 178 and glutamate 180.

Heterodimer of HisH and HisF.

It is found in the cytoplasm. The catalysed reaction is 5-[(5-phospho-1-deoxy-D-ribulos-1-ylimino)methylamino]-1-(5-phospho-beta-D-ribosyl)imidazole-4-carboxamide + L-glutamine = D-erythro-1-(imidazol-4-yl)glycerol 3-phosphate + 5-amino-1-(5-phospho-beta-D-ribosyl)imidazole-4-carboxamide + L-glutamate + H(+). The enzyme catalyses L-glutamine + H2O = L-glutamate + NH4(+). It functions in the pathway amino-acid biosynthesis; L-histidine biosynthesis; L-histidine from 5-phospho-alpha-D-ribose 1-diphosphate: step 5/9. Its function is as follows. IGPS catalyzes the conversion of PRFAR and glutamine to IGP, AICAR and glutamate. The HisH subunit catalyzes the hydrolysis of glutamine to glutamate and ammonia as part of the synthesis of IGP and AICAR. The resulting ammonia molecule is channeled to the active site of HisF. This is Imidazole glycerol phosphate synthase subunit HisH from Haemophilus influenzae (strain 86-028NP).